Consider the following 791-residue polypeptide: uncharacterized protein (791 aa).

The next 4 helical transmembrane spans lie at 104–124 (MWIL…FFLM), 131–151 (IAAI…YYII), 177–197 (ACLY…TLII), and 226–246 (WSGL…PSVL). N265 carries an N-linked (GlcNAc...) asparagine glycan. Transmembrane regions (helical) follow at residues 274–294 (FFIV…IFPA), 309–329 (SAVL…PLTL), 346–366 (WATC…LPGL), 421–441 (FIIN…SFFL), 471–491 (VHWG…FAFT), 501–521 (SYGF…LSLI), 533–553 (AFFE…LLYF), and 583–603 (LVAA…SAVT). N621 carries N-linked (GlcNAc...) asparagine glycosylation. The next 3 helical transmembrane spans lie at 653-673 (FVMW…LLQI), 697-717 (SVTG…NYLI), and 733-753 (AAAM…CVVY). N759 is a glycosylation site (N-linked (GlcNAc...) asparagine).

It belongs to the oligopeptide OPT transporter family.

Its subcellular location is the membrane. This is an uncharacterized protein from Schizosaccharomyces pombe (strain 972 / ATCC 24843) (Fission yeast).